Here is a 137-residue protein sequence, read N- to C-terminus: Small ribosomal subunit protein uS8 (137 aa).

It belongs to the universal ribosomal protein uS8 family. In terms of assembly, part of the 30S ribosomal subunit. Contacts proteins S5 and S12.

One of the primary rRNA binding proteins, it binds directly to 16S rRNA central domain where it helps coordinate assembly of the platform of the 30S subunit. The polypeptide is Small ribosomal subunit protein uS8 (Metamycoplasma arthritidis (strain 158L3-1) (Mycoplasma arthritidis)).